Here is a 1389-residue protein sequence, read N- to C-terminus: DNA-directed RNA polymerase subunit beta'' (1389 aa).

Zn(2+) is bound by residues Cys220, Cys290, Cys297, and Cys300.

The protein belongs to the RNA polymerase beta' chain family. RpoC2 subfamily. In plastids the minimal PEP RNA polymerase catalytic core is composed of four subunits: alpha, beta, beta', and beta''. When a (nuclear-encoded) sigma factor is associated with the core the holoenzyme is formed, which can initiate transcription. Zn(2+) serves as cofactor.

Its subcellular location is the plastid. The protein resides in the chloroplast. It carries out the reaction RNA(n) + a ribonucleoside 5'-triphosphate = RNA(n+1) + diphosphate. In terms of biological role, DNA-dependent RNA polymerase catalyzes the transcription of DNA into RNA using the four ribonucleoside triphosphates as substrates. This Chloranthus spicatus (Chulantree) protein is DNA-directed RNA polymerase subunit beta''.